The following is a 101-amino-acid chain: Small ribosomal subunit protein uS14 (101 aa).

This sequence belongs to the universal ribosomal protein uS14 family. As to quaternary structure, part of the 30S ribosomal subunit. Contacts proteins S3 and S10.

Functionally, binds 16S rRNA, required for the assembly of 30S particles and may also be responsible for determining the conformation of the 16S rRNA at the A site. The protein is Small ribosomal subunit protein uS14 of Chlamydia abortus (strain DSM 27085 / S26/3) (Chlamydophila abortus).